The following is a 155-amino-acid chain: Xanthine-guanine phosphoribosyltransferase (155 aa).

5-phospho-alpha-D-ribose 1-diphosphate contacts are provided by residues 37–38 (RG), Arg69, and 90–98 (DDLVDTGGT). Arg69 is a binding site for GMP. Asp91 contacts Mg(2+). The guanine site is built by Asp94 and Ile137. 2 residues coordinate xanthine: Asp94 and Ile137. Residues 94–98 (DTGGT) and 136–137 (WI) contribute to the GMP site.

It belongs to the purine/pyrimidine phosphoribosyltransferase family. XGPT subfamily. Homotetramer. Mg(2+) serves as cofactor.

The protein localises to the cell inner membrane. The catalysed reaction is GMP + diphosphate = guanine + 5-phospho-alpha-D-ribose 1-diphosphate. The enzyme catalyses XMP + diphosphate = xanthine + 5-phospho-alpha-D-ribose 1-diphosphate. It carries out the reaction IMP + diphosphate = hypoxanthine + 5-phospho-alpha-D-ribose 1-diphosphate. Its pathway is purine metabolism; GMP biosynthesis via salvage pathway; GMP from guanine: step 1/1. The protein operates within purine metabolism; XMP biosynthesis via salvage pathway; XMP from xanthine: step 1/1. Purine salvage pathway enzyme that catalyzes the transfer of the ribosyl-5-phosphate group from 5-phospho-alpha-D-ribose 1-diphosphate (PRPP) to the N9 position of the 6-oxopurines guanine and xanthine to form the corresponding ribonucleotides GMP (guanosine 5'-monophosphate) and XMP (xanthosine 5'-monophosphate), with the release of PPi. To a lesser extent, also acts on hypoxanthine. The chain is Xanthine-guanine phosphoribosyltransferase from Aeromonas salmonicida (strain A449).